A 268-amino-acid chain; its full sequence is Forkhead box protein R1 (268 aa).

Residues 91–126 form a disordered region; it reads EDSCSEASEVQQPLPPCRQKRKQRRSTVPLPLAPGR. Residues 149–248 constitute a DNA-binding region (fork-head); that stretch reads RPPLHYFHLI…KEARTLASTQ (100 aa).

In terms of tissue distribution, expressed in adult germ cells (at protein level). Expressed in heart, liver, lung and embryonic brain.

It localises to the nucleus. Its subcellular location is the cytoplasm. The protein localises to the perinuclear region. Transcription factor which acts as both an activator and a repressor. Activates transcription of a number of genes including the heat shock chaperones HSPA1A and HSPA6 and the antioxidant NADPH-dependent reductase DHRS2 which are involved in protection against oxidative stress. Required for normal brain development. This is Forkhead box protein R1 (Foxr1) from Mus musculus (Mouse).